Reading from the N-terminus, the 900-residue chain is DNA polymerase nu (900 aa).

Basic and acidic residues predominate over residues 60–75 (LEDRKTQSPEKKDLKS). Disordered regions lie at residues 60-90 (LEDR…LSPQ) and 863-900 (GPPP…SFCL). Positions 76–90 (LRSQTSRGSAKLSPQ) are enriched in polar residues.

Belongs to the DNA polymerase type-A family. As to quaternary structure, interacts with FANCD2, FANCI, PCNA, RAD51 and HELQ. As to expression, highly expressed in testis and heart. Weakly expressed in skeletal muscle.

The protein localises to the nucleus. The catalysed reaction is DNA(n) + a 2'-deoxyribonucleoside 5'-triphosphate = DNA(n+1) + diphosphate. Its activity is regulated as follows. Inhibited by ddTTP. Its function is as follows. DNA polymerase with very low fidelity that catalyzes considerable misincorporation by inserting dTTP opposite a G template, and dGTP opposite a T template. Is the least accurate of the DNA polymerase A family (i.e. POLG, POLN and POLQ). Can perform accurate translesion DNA synthesis (TLS) past a 5S-thymine glycol. Can perform efficient strand displacement past a nick or a gap and gives rise to an amount of product similar to that on non-damaged template. Has no exonuclease activity. Error-prone DNA polymerase that preferentially misincorporates dT regardless of template sequence. May play a role in TLS during interstrand cross-link (ICL) repair. May be involved in TLS when genomic replication is blocked by extremely large major groove DNA lesions. May function in the bypass of some DNA-protein and DNA-DNA cross-links. May have a role in cellular tolerance to DNA cross-linking agents. Involved in the repair of DNA cross-links and double-strand break (DSB) resistance. Participates in FANCD2-mediated repair. Forms a complex with HELQ helicase that participates in homologous recombination (HR) repair and is essential for cellular protection against DNA cross-links. The sequence is that of DNA polymerase nu (POLN) from Homo sapiens (Human).